The following is a 185-amino-acid chain: Translocon-associated protein subunit gamma (185 aa).

An N-acetylmethionine modification is found at methionine 1. Residues 1–27 (MAPKGSSKQQSEEDLLLQDFSRNLSAK) are Lumenal-facing. Residues serine 7 and serine 11 each carry the phosphoserine modification. The chain crosses the membrane as a helical span at residues 28 to 48 (SSALFFGNAFIVSAIPIWLYW). Topologically, residues 49-54 (RIWHMD) are cytoplasmic. A helical membrane pass occupies residues 55 to 76 (LIQSAVLYSVMTLVSTYLVAFA). Residues 77-135 (YKNVKFVLKHKVAQKREDAVSKEVTRKLSEADNRKMSRKEKDERILWKKNEVADYEATT) lie on the Lumenal side of the membrane. A Phosphoserine modification is found at serine 105. The helical transmembrane segment at 136-157 (FSIFYNNTLFLVVVIVASFFIL) threads the bilayer. The Cytoplasmic segment spans residues 158-163 (KNFNPT). The chain crosses the membrane as a helical span at residues 164-184 (VNYILSISASSGLIALLSTGS).

It belongs to the TRAP-gamma family. In terms of assembly, heterotetramer of TRAP-alpha, TRAP-beta, TRAP-delta and TRAP-gamma.

The protein localises to the endoplasmic reticulum membrane. Its function is as follows. TRAP proteins are part of a complex whose function is to bind calcium to the ER membrane and thereby regulate the retention of ER resident proteins. The polypeptide is Translocon-associated protein subunit gamma (SSR3) (Homo sapiens (Human)).